We begin with the raw amino-acid sequence, 142 residues long: uncharacterized protein (142 aa).

Residues 70 to 94 (PKSVSNSKKKKEKAEKGLLRPTTKP) form a disordered region. The span at 81–94 (EKAEKGLLRPTTKP) shows a compositional bias: basic and acidic residues.

This is an uncharacterized protein from Bacillus subtilis (strain 168).